Consider the following 179-residue polypeptide: Large ribosomal subunit protein uL6 (179 aa).

It belongs to the universal ribosomal protein uL6 family. In terms of assembly, part of the 50S ribosomal subunit.

In terms of biological role, this protein binds to the 23S rRNA, and is important in its secondary structure. It is located near the subunit interface in the base of the L7/L12 stalk, and near the tRNA binding site of the peptidyltransferase center. This chain is Large ribosomal subunit protein uL6, found in Legionella pneumophila (strain Paris).